Reading from the N-terminus, the 343-residue chain is Small ribosomal subunit biogenesis GTPase RsgA (343 aa).

Positions 1-32 (MAKRRLSKRQVDRIRERQSQRLDTSVAAPDGK) are disordered. The segment covering 9–20 (RQVDRIRERQSQ) has biased composition (basic and acidic residues). The CP-type G domain occupies 109–273 (YGKLKPVAAN…CIDSPGIREF (165 aa)). GTP-binding positions include 156–159 (NKLD) and 215–223 (GQSGVGKSS). Cys297, Cys302, His304, and Cys310 together coordinate Zn(2+).

Belongs to the TRAFAC class YlqF/YawG GTPase family. RsgA subfamily. Monomer. Associates with 30S ribosomal subunit, binds 16S rRNA. The cofactor is Zn(2+).

Its subcellular location is the cytoplasm. Functionally, one of several proteins that assist in the late maturation steps of the functional core of the 30S ribosomal subunit. Helps release RbfA from mature subunits. May play a role in the assembly of ribosomal proteins into the subunit. Circularly permuted GTPase that catalyzes slow GTP hydrolysis, GTPase activity is stimulated by the 30S ribosomal subunit. This is Small ribosomal subunit biogenesis GTPase RsgA from Saccharophagus degradans (strain 2-40 / ATCC 43961 / DSM 17024).